We begin with the raw amino-acid sequence, 108 residues long: Monothiol bacilliredoxin BrxC (108 aa).

At C31 the chain carries S-bacillithiol cysteine disulfide.

In terms of assembly, interacts with AbrB, BdhA, Bdr, BrxB, FolD, GapA, GapB, GatA, PfkA, PyrAA, PyrAB, PyrE, PyrG, PyrH, RpsB, RpsK, RpsL, SalA, SucC, Tuf and YtsJ. In terms of processing, cys can react with bacillithiol (BSH) to form mixed disulfides. S-bacillithiolation protects Cys residues against overoxidation by acting as a redox switch in response to oxidative stress.

Its function is as follows. S-bacillithiolation is the formation of mixed disulfide bonds between protein thiols and the general thiol reductant bacillithiol (BSH) under oxidative stress. BSH is an equivalent of glutathione (GSH) in Firmicutes. This protein is a monothiol bacilliredoxin, which debacillithiolates (removes BSH) the S-bacillithiolated glyceraldehyde-3-phosphate dehydrogenases (GAPDHs) GapA and GapB in vivo and probably a number of other oxidized cytosolic proteins. Debacillithiolates the S-bacillithiolated Bdr (Bdr-SSB) and BrxB (BrxB-SSB) in vitro. Involved in maintaining redox homeostasis in response to disulfide stress conditions. The polypeptide is Monothiol bacilliredoxin BrxC (Bacillus subtilis (strain 168)).